A 37-amino-acid polypeptide reads, in one-letter code: Cytochrome b6-f complex subunit 5 (37 aa).

The chain crosses the membrane as a helical span at residues 5-25 (LLSGIVLGLIVVTLAGLFYAA).

This sequence belongs to the PetG family. As to quaternary structure, the 4 large subunits of the cytochrome b6-f complex are cytochrome b6, subunit IV (17 kDa polypeptide, PetD), cytochrome f and the Rieske protein, while the 4 small subunits are PetG, PetL, PetM and PetN. The complex functions as a dimer.

It is found in the cellular thylakoid membrane. In terms of biological role, component of the cytochrome b6-f complex, which mediates electron transfer between photosystem II (PSII) and photosystem I (PSI), cyclic electron flow around PSI, and state transitions. PetG is required for either the stability or assembly of the cytochrome b6-f complex. This chain is Cytochrome b6-f complex subunit 5, found in Anabaena variabilis.